The following is a 136-amino-acid chain: Large ribosomal subunit protein uL16 (136 aa).

Belongs to the universal ribosomal protein uL16 family. Part of the 50S ribosomal subunit.

Binds 23S rRNA and is also seen to make contacts with the A and possibly P site tRNAs. This chain is Large ribosomal subunit protein uL16, found in Shewanella sediminis (strain HAW-EB3).